Reading from the N-terminus, the 47-residue chain is Defensin-like protein 1 (47 aa).

4 cysteine pairs are disulfide-bonded: Cys-5–Cys-47, Cys-16–Cys-36, Cys-22–Cys-43, and Cys-26–Cys-45.

Belongs to the DEFL family.

Functionally, fabatins have antibacterial activity against Gram-positive and Gram-negative bacteria. High activity against P.aeruginosa. No activity against S.cerevisiae and C.albicans. The chain is Defensin-like protein 1 from Vicia faba (Broad bean).